The primary structure comprises 73 residues: Ocellatin-PT7 (73 aa).

The N-terminal stretch at 1–22 is a signal peptide; sequence MAFLKKSLFLVLFLGLVSLSIC. Residues 23-39 constitute a propeptide that is removed on maturation; it reads DEEKRQDEDDDDDDDEE.

Expressed by the skin glands.

The protein localises to the secreted. In terms of biological role, has antibacterial activity against Gram-negative bacteria E.coli ATCC 25922 (MIC=60 uM) and S.choleraesuis ATCC 14028 (MIC=240 uM) and against Gram-positive bacterium S.aureus ATCC 29313 (MIC=240 uM). Shows no hemolytic activity and no cytotoxicity. The sequence is that of Ocellatin-PT7 from Leptodactylus pustulatus (Ceara white-lipped frog).